The chain runs to 174 residues: SDLWVQKMKTYFNRIDFDKDGAITRKDFESMATRFAKESEMKPEHAKVLMDSLTGVWDKFLANVAGGKGIDQATFISSMKEKVKDPNAKAVVEGPLPLFFRAVDTNEDNMISRDEYGIFFNMLGLNPDMAPASFDAIDTNNDGLLSQEEFVTAGSDFFINDQDSPNKVFWGPLV.

Ser1 is subject to N-acetylserine. 4 EF-hand domains span residues 3–38 (LWVQKMKTYFNRIDFDKDGAITRKDFESMATRFAKE), 55–90 (GVWDKFLANVAGGKGIDQATFISSMKEKVKDPNAKA), 91–126 (VVEGPLPLFFRAVDTNEDNMISRDEYGIFFNMLGLN), and 125–160 (LNPDMAPASFDAIDTNNDGLLSQEEFVTAGSDFFIN). Ca(2+) contacts are provided by Asp16, Asp18, Asp20, and Asp27. 9 residues coordinate Ca(2+): Asp104, Asn106, Asp108, Met110, Glu115, Asp138, Asn140, Asp142, and Glu149.

Like parvalbumins, SCPs seem to be more abundant in fast contracting muscles, but no functional relationship can be established from this distribution. The polypeptide is Sarcoplasmic calcium-binding protein (Perinereis vancaurica tetradentata (Sandworm)).